The chain runs to 249 residues: Proteasome activator complex subunit 1 (249 aa).

A disordered region spans residues 59–102 (APLDIPVPDPVKEKEKEERKKQQEKEEKEEKKKGDEDDKGPPCG). Residues 68–98 (PVKEKEKEERKKQQEKEEKEEKKKGDEDDKG) are compositionally biased toward basic and acidic residues.

It belongs to the PA28 family. Heterodimer of PSME1 and PSME2, which forms a hexameric ring. PSME1 can form homoheptamers.

Implicated in immunoproteasome assembly and required for efficient antigen processing. The PA28 activator complex enhances the generation of class I binding peptides by altering the cleavage pattern of the proteasome. This is Proteasome activator complex subunit 1 (Psme1) from Mus musculus (Mouse).